The sequence spans 247 residues: ATP synthase subunit a, chloroplastic (247 aa).

A run of 5 helical transmembrane segments spans residues 38–58, 95–115, 134–154, 199–219, and 220–240; these read QVLI…ALAV, VPFI…GALL, INTT…AGLT, LVVV…VMFL, and GLFT…AYIG.

Belongs to the ATPase A chain family. In terms of assembly, F-type ATPases have 2 components, CF(1) - the catalytic core - and CF(0) - the membrane proton channel. CF(1) has five subunits: alpha(3), beta(3), gamma(1), delta(1), epsilon(1). CF(0) has four main subunits: a, b, b' and c.

Its subcellular location is the plastid. It localises to the chloroplast thylakoid membrane. In terms of biological role, key component of the proton channel; it plays a direct role in the translocation of protons across the membrane. This Helianthus annuus (Common sunflower) protein is ATP synthase subunit a, chloroplastic.